Reading from the N-terminus, the 179-residue chain is ATP-dependent protease subunit HslV (179 aa).

The active site involves T7. Na(+) is bound by residues G162, C165, and T168.

Belongs to the peptidase T1B family. HslV subfamily. In terms of assembly, a double ring-shaped homohexamer of HslV is capped on each side by a ring-shaped HslU homohexamer. The assembly of the HslU/HslV complex is dependent on binding of ATP.

The protein resides in the cytoplasm. It catalyses the reaction ATP-dependent cleavage of peptide bonds with broad specificity.. With respect to regulation, allosterically activated by HslU binding. Functionally, protease subunit of a proteasome-like degradation complex believed to be a general protein degrading machinery. This Bordetella petrii (strain ATCC BAA-461 / DSM 12804 / CCUG 43448) protein is ATP-dependent protease subunit HslV.